The sequence spans 122 residues: Large ribosomal subunit protein uL14 (122 aa).

The protein belongs to the universal ribosomal protein uL14 family. Part of the 50S ribosomal subunit. Forms a cluster with proteins L3 and L19. In the 70S ribosome, L14 and L19 interact and together make contacts with the 16S rRNA in bridges B5 and B8.

Functionally, binds to 23S rRNA. Forms part of two intersubunit bridges in the 70S ribosome. The polypeptide is Large ribosomal subunit protein uL14 (Streptococcus suis (strain 05ZYH33)).